Here is a 142-residue protein sequence, read N- to C-terminus: 5-hydroxymethyl-dUMP N-hydrolase (142 aa).

8 residues coordinate 5-hydroxymethyl-dUMP: glycine 7, isoleucine 9, arginine 10, glycine 11, serine 78, glycine 80, glutamate 84, and serine 108.

It belongs to the 2'-deoxynucleoside 5'-phosphate N-hydrolase 1 family. Monomer and homodimer.

Its subcellular location is the cytoplasm. The protein localises to the nucleus. The catalysed reaction is 5-hydroxymethyl-dUMP + H2O = 5-hydroxymethyluracil + 2-deoxy-D-ribose 5-phosphate. Part of a nucleotide salvage pathway that eliminates epigenetically modified 5-hydroxymethyl-dCMP (hmdCMP) in a two-step process entailing deamination to cytotoxic 5-hydroxymethyl-dUMP (hmdUMP), followed by its hydrolysis into 5-hydroxymethyluracil (hmU) and 2-deoxy-D-ribose 5-phosphate (deoxyribosephosphate). Catalyzes the second step in that pathway, the hydrolysis of the N-glycosidic bond in hmdUMP, degrading this cytotoxic nucleotide to avoid its genomic integration. The protein is 5-hydroxymethyl-dUMP N-hydrolase (dnph1) of Tetraodon nigroviridis (Spotted green pufferfish).